A 624-amino-acid polypeptide reads, in one-letter code: Ceramide transfer protein (624 aa).

The span at 1–11 (MSDNQSWNSSG) shows a compositional bias: polar residues. The segment at 1-24 (MSDNQSWNSSGSEEDPETESGPPV) is disordered. The region spanning 23–117 (PVERCGVLSK…WIDAIEQHKT (95 aa)) is the PH domain. The residue at position 126 (Ser126) is a Phosphoserine. Phosphoserine; by PKD is present on Ser132. Ser135 carries the phosphoserine modification. Residues 263-303 (IELMVKREDSWQKRLDKETEKKRRTEEAYKNAMTELKKKSH) are a coiled coil. Ser315 carries the phosphoserine modification. Residues 321–327 (EFFDAVE) carry the FFAT motif. Position 372 is a phosphotyrosine (Tyr372). 3 positions are modified to phosphoserine: Ser373, Ser377, and Ser380. Residues 389 to 618 (DVHRFSSQVE…FTSYVQEKTA (230 aa)) enclose the START domain. Residues Glu472, Gln493, Asn530, and Tyr579 each coordinate an N-acylsphing-4-enine.

Interacts with VAPA and VAPB. Interaction with VAPB is less efficient than with VAPA. Interacts (via FFAT motif) with MOSPD2 (via MSP domain). In terms of processing, phosphorylation on Ser-132 decreases the affinity toward phosphatidylinositol 4-phosphate at Golgi membranes and reduces ceramide transfer activity. Inactivated by hyperphosphorylation of serine residues by CSNK1G2/CK1 that triggers dissociation from the Golgi complex, thus down-regulating ER-to-Golgi transport of ceramide and sphingomyelin synthesis. Widely expressed.

The protein localises to the cytoplasm. The protein resides in the golgi apparatus. Its subcellular location is the endoplasmic reticulum. The enzyme catalyses N-hexadecanoylsphing-4-enine(in) = N-hexadecanoylsphing-4-enine(out). In terms of biological role, shelters ceramides and diacylglycerol lipids inside its START domain and mediates the intracellular trafficking of ceramides and diacylglycerol lipids in a non-vesicular manner. This chain is Ceramide transfer protein, found in Homo sapiens (Human).